A 316-amino-acid chain; its full sequence is tRNA-cytidine(32) 2-sulfurtransferase (316 aa).

The PP-loop motif signature appears at 58–63; sequence SGGKDS. [4Fe-4S] cluster is bound by residues Cys-133, Cys-136, and Cys-224.

This sequence belongs to the TtcA family. As to quaternary structure, homodimer. The cofactor is Mg(2+). [4Fe-4S] cluster serves as cofactor.

It localises to the cytoplasm. The enzyme catalyses cytidine(32) in tRNA + S-sulfanyl-L-cysteinyl-[cysteine desulfurase] + AH2 + ATP = 2-thiocytidine(32) in tRNA + L-cysteinyl-[cysteine desulfurase] + A + AMP + diphosphate + H(+). Its pathway is tRNA modification. In terms of biological role, catalyzes the ATP-dependent 2-thiolation of cytidine in position 32 of tRNA, to form 2-thiocytidine (s(2)C32). The sulfur atoms are provided by the cysteine/cysteine desulfurase (IscS) system. This Aromatoleum aromaticum (strain DSM 19018 / LMG 30748 / EbN1) (Azoarcus sp. (strain EbN1)) protein is tRNA-cytidine(32) 2-sulfurtransferase.